The sequence spans 121 residues: UPF0102 protein DehaBAV1_0707 (121 aa).

This sequence belongs to the UPF0102 family.

The sequence is that of UPF0102 protein DehaBAV1_0707 from Dehalococcoides mccartyi (strain ATCC BAA-2100 / JCM 16839 / KCTC 5957 / BAV1).